The chain runs to 119 residues: Large ribosomal subunit protein uL18 (119 aa).

The protein belongs to the universal ribosomal protein uL18 family. As to quaternary structure, part of the 50S ribosomal subunit; part of the 5S rRNA/L5/L18/L25 subcomplex. Contacts the 5S and 23S rRNAs.

In terms of biological role, this is one of the proteins that bind and probably mediate the attachment of the 5S RNA into the large ribosomal subunit, where it forms part of the central protuberance. The polypeptide is Large ribosomal subunit protein uL18 (Clostridium botulinum (strain 657 / Type Ba4)).